The sequence spans 195 residues: Imidazoleglycerol-phosphate dehydratase (195 aa).

This sequence belongs to the imidazoleglycerol-phosphate dehydratase family.

The protein resides in the cytoplasm. The enzyme catalyses D-erythro-1-(imidazol-4-yl)glycerol 3-phosphate = 3-(imidazol-4-yl)-2-oxopropyl phosphate + H2O. It functions in the pathway amino-acid biosynthesis; L-histidine biosynthesis; L-histidine from 5-phospho-alpha-D-ribose 1-diphosphate: step 6/9. In Campylobacter concisus (strain 13826), this protein is Imidazoleglycerol-phosphate dehydratase.